A 57-amino-acid polypeptide reads, in one-letter code: Large ribosomal subunit protein bL32 (57 aa).

The tract at residues 1–23 (MAVPKKKTSKSKRDKRRATWRHK) is disordered.

It belongs to the bacterial ribosomal protein bL32 family.

The sequence is that of Large ribosomal subunit protein bL32 from Trichormus variabilis (strain ATCC 29413 / PCC 7937) (Anabaena variabilis).